A 456-amino-acid chain; its full sequence is Acid sphingomyelinase-like phosphodiesterase 3b (456 aa).

The N-terminal stretch at 1–18 is a signal peptide; the sequence is MTLLGWLIFLAPWGVAGA. Zn(2+) contacts are provided by Asp-28 and His-30. N-linked (GlcNAc...) asparagine glycosylation occurs at Asn-34. An intrachain disulfide couples Cys-45 to Cys-64. N-linked (GlcNAc...) asparagine glycosylation is present at Asn-72. Asp-93 contacts Zn(2+). N-linked (GlcNAc...) asparagine glycosylation is present at Asn-100. A Zn(2+)-binding site is contributed by Asn-134. Asn-164 and Asn-223 each carry an N-linked (GlcNAc...) asparagine glycan. Zn(2+)-binding residues include His-236, His-277, and His-279. Intrachain disulfides connect Cys-405–Cys-409 and Cys-415–Cys-428.

The protein belongs to the acid sphingomyelinase family. As to quaternary structure, interacts with TLR4, TLR7, TLR8 and TLR9. Zn(2+) is required as a cofactor. Post-translationally, N-glycosylated. Macrophages and dendritic cells.

It localises to the secreted. It is found in the cell membrane. Its function is as follows. Lipid-modulating phosphodiesterase. Active on the surface of macrophages and dendritic cells and strongly influences macrophage lipid composition and membrane fluidity. Acts as a negative regulator of Toll-like receptor signaling. Has in vitro phosphodiesterase activity, but the physiological substrate is unknown. Lacks activity with phosphocholine-containing lipids, but can cleave CDP-choline, and can release phosphate from ATP and ADP (in vitro). This chain is Acid sphingomyelinase-like phosphodiesterase 3b (Smpdl3b), found in Mus musculus (Mouse).